Reading from the N-terminus, the 236-residue chain is Small ribosomal subunit protein uS3 (236 aa).

Positions 39 to 107 constitute a KH type-2 domain; the sequence is IREFLTEELK…DTSLNIVEVR (69 aa). The interval 214–236 is disordered; that stretch reads ASERRAVEGDNQGSSSNRRRENA.

It belongs to the universal ribosomal protein uS3 family. In terms of assembly, part of the 30S ribosomal subunit. Forms a tight complex with proteins S10 and S14.

Binds the lower part of the 30S subunit head. Binds mRNA in the 70S ribosome, positioning it for translation. The protein is Small ribosomal subunit protein uS3 of Brucella melitensis biotype 1 (strain ATCC 23456 / CCUG 17765 / NCTC 10094 / 16M).